We begin with the raw amino-acid sequence, 395 residues long: Protochlorophyllide reductase B, chloroplastic (395 aa).

Residues 1 to 59 (MALQAATSFLPSALSARKEGAAKDSAFFGVRLADGLKLDATSLGLRTKRVNTSSVAIRA) constitute a chloroplast transit peptide.

It belongs to the short-chain dehydrogenases/reductases (SDR) family. POR subfamily.

It is found in the plastid. It localises to the chloroplast. It carries out the reaction chlorophyllide a + NADP(+) = protochlorophyllide a + NADPH + H(+). It participates in porphyrin-containing compound metabolism; chlorophyll biosynthesis. Phototransformation of protochlorophyllide (Pchlide) to chlorophyllide (Chlide). The chain is Protochlorophyllide reductase B, chloroplastic (PORB) from Hordeum vulgare (Barley).